Consider the following 499-residue polypeptide: Endoglucanase (499 aa).

The N-terminal stretch at 1–29 (MKRSISIFITCLLIAVLTMGGLLPSPASA) is a signal peptide. Substrate-binding positions include His-65, 69 to 70 (WY), Tyr-96, and His-131. Glu-169 functions as the Proton donor in the catalytic mechanism. Tyr-231 is a binding site for substrate. The Nucleophile role is filled by Glu-257. Residues 263–264 (AS), Trp-291, and 296–298 (KQE) each bind substrate. Positions 330 to 340 (RGTKDSTKDVP) are enriched in basic and acidic residues. The disordered stretch occupies residues 330–353 (RGTKDSTKDVPETPAQDNPTQEKG). In terms of domain architecture, CBM3 spans 350-499 (QEKGVSVQYK…GKLIWGTEPN (150 aa)).

Belongs to the glycosyl hydrolase 5 (cellulase A) family.

It carries out the reaction Endohydrolysis of (1-&gt;4)-beta-D-glucosidic linkages in cellulose, lichenin and cereal beta-D-glucans.. The polypeptide is Endoglucanase (bglC) (Bacillus subtilis).